Reading from the N-terminus, the 287-residue chain is UPF0354 protein SSP1020 (287 aa).

The protein belongs to the UPF0354 family.

The polypeptide is UPF0354 protein SSP1020 (Staphylococcus saprophyticus subsp. saprophyticus (strain ATCC 15305 / DSM 20229 / NCIMB 8711 / NCTC 7292 / S-41)).